Consider the following 741-residue polypeptide: Isocitrate dehydrogenase [NADP] (741 aa).

Residues asparagine 85 and serine 87 each coordinate NADP(+). Serine 132, asparagine 135, arginine 139, arginine 145, and lysine 255 together coordinate D-threo-isocitrate. Residue asparagine 135 coordinates NADP(+). A Mn(2+)-binding site is contributed by aspartate 350. Residues tyrosine 420 and arginine 547 each coordinate D-threo-isocitrate. Aspartate 548 lines the Mn(2+) pocket. Positions 585, 589, 600, 602, and 649 each coordinate NADP(+).

Belongs to the monomeric-type IDH family. Monomer. Mg(2+) serves as cofactor. It depends on Mn(2+) as a cofactor.

The protein localises to the cytoplasm. It catalyses the reaction D-threo-isocitrate + NADP(+) = 2-oxoglutarate + CO2 + NADPH. Activity is inhibited in the presence of Ca(2+). In terms of biological role, catalyzes the oxidative decarboxylation of isocitrate to 2-oxoglutarate and carbon dioxide with the concomitant reduction of NADP(+). The polypeptide is Isocitrate dehydrogenase [NADP] (Azotobacter vinelandii).